Reading from the N-terminus, the 149-residue chain is 3-hydroxyacyl-[acyl-carrier-protein] dehydratase FabZ (149 aa).

H53 is an active-site residue.

This sequence belongs to the thioester dehydratase family. FabZ subfamily.

The protein resides in the cytoplasm. The catalysed reaction is a (3R)-hydroxyacyl-[ACP] = a (2E)-enoyl-[ACP] + H2O. Involved in unsaturated fatty acids biosynthesis. Catalyzes the dehydration of short chain beta-hydroxyacyl-ACPs and long chain saturated and unsaturated beta-hydroxyacyl-ACPs. The protein is 3-hydroxyacyl-[acyl-carrier-protein] dehydratase FabZ of Neisseria meningitidis serogroup B (strain ATCC BAA-335 / MC58).